We begin with the raw amino-acid sequence, 303 residues long: Sterol-4-alpha-carboxylate 3-dehydrogenase ERG26, decarboxylating (303 aa).

Residues 8–9 and 30–32 each bind NADP(+); these read SL and TAS. S71 provides a ligand contact to substrate. The interval 77 to 96 is disordered; sequence PTQEPTSEENAHRYDENNAP. NADP(+) contacts are provided by residues Y102, K106, and 128–131; that span reads IPGI. Y102 is a binding site for substrate. K106 functions as the Proton donor in the catalytic mechanism.

It belongs to the 3-beta-HSD family. As to quaternary structure, heterotetramer of ERG25, ERG26, ERG27 and ERG28. ERG28 acts as a scaffold to tether ERG27 and other 4,4-demethylation-related enzymes, forming a demethylation enzyme complex, in the endoplasmic reticulum.

Its subcellular location is the endoplasmic reticulum membrane. It functions in the pathway steroid metabolism; ergosterol biosynthesis. Its function is as follows. Sterol-4-alpha-carboxylate 3-dehydrogenase; part of the third module of ergosterol biosynthesis pathway that includes the late steps of the pathway. ERG26 is a catalytic component of the C-4 demethylation complex that catalyzes the conversion of 4,4-dimethylfecosterol into fecosterol via 4-methylfecosterol. The third module or late pathway involves the ergosterol synthesis itself through consecutive reactions that mainly occur in the endoplasmic reticulum (ER) membrane. Firstly, the squalene synthase ERG9 catalyzes the condensation of 2 farnesyl pyrophosphate moieties to form squalene, which is the precursor of all steroids. Squalene synthase is crucial for balancing the incorporation of farnesyl diphosphate (FPP) into sterol and nonsterol isoprene synthesis. Secondly, squalene is converted into lanosterol by the consecutive action of the squalene epoxidase ERG1 and the lanosterol synthase ERG7. Then, the delta(24)-sterol C-methyltransferase ERG6 methylates lanosterol at C-24 to produce eburicol. Eburicol is the substrate of the sterol 14-alpha demethylase encoded by CYP51A, CYP51B and CYP51C, to yield 4,4,24-trimethyl ergosta-8,14,24(28)-trienol. CYP51B encodes the enzyme primarily responsible for sterol 14-alpha-demethylation, and plays an essential role in ascospore formation. CYP51A encodes an additional sterol 14-alpha-demethylase, induced on ergosterol depletion and responsible for the intrinsic variation in azole sensitivity. The third CYP51 isoform, CYP51C, does not encode a sterol 14-alpha-demethylase, but is required for full virulence on host wheat ears. The C-14 reductase ERG24 then reduces the C14=C15 double bond which leads to 4,4-dimethylfecosterol. A sequence of further demethylations at C-4, involving the C-4 demethylation complex containing the C-4 methylsterol oxidases ERG25, the sterol-4-alpha-carboxylate 3-dehydrogenase ERG26 and the 3-keto-steroid reductase ERG27, leads to the production of fecosterol via 4-methylfecosterol. ERG28 has a role as a scaffold to help anchor ERG25, ERG26 and ERG27 to the endoplasmic reticulum. The C-8 sterol isomerase ERG2 then catalyzes the reaction which results in unsaturation at C-7 in the B ring of sterols and thus converts fecosterol to episterol. The sterol-C5-desaturases ERG3A and ERG3BB then catalyze the introduction of a C-5 double bond in the B ring to produce 5-dehydroepisterol. The C-22 sterol desaturases ERG5A and ERG5B further convert 5-dehydroepisterol into ergosta-5,7,22,24(28)-tetraen-3beta-ol by forming the C-22(23) double bond in the sterol side chain. Finally, ergosta-5,7,22,24(28)-tetraen-3beta-ol is substrate of the C-24(28) sterol reductase ERG4 to produce ergosterol. This chain is Sterol-4-alpha-carboxylate 3-dehydrogenase ERG26, decarboxylating, found in Gibberella zeae (strain ATCC MYA-4620 / CBS 123657 / FGSC 9075 / NRRL 31084 / PH-1) (Wheat head blight fungus).